A 97-amino-acid chain; its full sequence is MKTSWIKIFFQGMIHLYRWTISPLLGSPCRFFPSCSEYALVALKKHPLKRSLFLIANRLLKCGPWHIGGIDLVPGTSIEEYLESPDDKNVPPDQETV.

It belongs to the UPF0161 family.

It is found in the cell inner membrane. Its function is as follows. Could be involved in insertion of integral membrane proteins into the membrane. The sequence is that of Putative membrane protein insertion efficiency factor from Chlamydia muridarum (strain MoPn / Nigg).